The chain runs to 957 residues: Serine-aspartate repeat-containing protein C (957 aa).

Positions 1–50 (MNNKKTVTNRKGMIPNRLNKFSIRKYSVGTASILVGTTLIFGLSGHEAKA) are cleaved as a signal peptide. Residues 51–166 (AEHTNGELNQ…TPKTTTIKPR (116 aa)) form a disordered region. Residues 51–495 (AEHTNGELNQ…GSSTANGDQK (445 aa)) form a ligand binding A region region. The span at 56-71 (GELNQSKNETTAPSEN) shows a compositional bias: polar residues. Over residues 72-83 (KTTEKVDSRQLK) the composition is skewed to basic and acidic residues. The segment covering 84-114 (DNTQTATADQPKVTMSDSATVKETSSNMQSP) has biased composition (polar residues). Low complexity predominate over residues 115 to 132 (QNATASQSTTQTSNVTTN). The segment covering 133 to 164 (DKSSTTYSNETDKSNLTQAKDVSATPKTTTIK) has biased composition (polar residues). CNA-B domains lie at 496–606 (KYNL…YKTP) and 607–717 (KYSL…EEET). The segment at 678 to 937 (TQTGTNTTED…NNSNNGTLFG (260 aa)) is disordered. 2 stretches are compositionally biased toward acidic residues: residues 685-695 (TEDDKDADGGE) and 712-896 (YYEE…DSDS). An LPXTG sorting signal motif is present at residues 920–924 (LPETG). Residues 922–937 (ETGSENNNSNNGTLFG) are compositionally biased toward low complexity. The residue at position 923 (threonine 923) is a Pentaglycyl murein peptidoglycan amidated threonine. Residues 924 to 957 (GSENNNSNNGTLFGGLFAALGSLLLFGRRKKQNK) constitute a propeptide, removed by sortase.

The protein belongs to the serine-aspartate repeat-containing protein (SDr) family. In terms of assembly, homodimerizes; via N2-Domain. Interacts with host NRXN1; this interaction mediates bacterial attachment to host cells.

Its subcellular location is the secreted. It localises to the cell wall. Functionally, cell surface-associated calcium-binding protein which plays an important role in adhesion and pathogenesis. Mediates interactions with components of the extracellular matrix such as host NRXN1 to promote bacterial adhesion. The protein is Serine-aspartate repeat-containing protein C (sdrC) of Staphylococcus aureus (strain MSSA476).